Here is a 400-residue protein sequence, read N- to C-terminus: Putative zinc-binding protein ORF78 (400 aa).

Residues 9–33 (LPRKRRAVAQPRTRQPPPKVHREDT) are disordered.

The protein is Putative zinc-binding protein ORF78 (ORF78) of Ictalurid herpesvirus 1 (strain Auburn) (IcHV-1).